The following is a 408-amino-acid chain: ATP phosphoribosyltransferase regulatory subunit (408 aa).

Belongs to the class-II aminoacyl-tRNA synthetase family. HisZ subfamily. In terms of assembly, heteromultimer composed of HisG and HisZ subunits.

It localises to the cytoplasm. The protein operates within amino-acid biosynthesis; L-histidine biosynthesis; L-histidine from 5-phospho-alpha-D-ribose 1-diphosphate: step 1/9. Functionally, required for the first step of histidine biosynthesis. May allow the feedback regulation of ATP phosphoribosyltransferase activity by histidine. This chain is ATP phosphoribosyltransferase regulatory subunit, found in Thermosynechococcus vestitus (strain NIES-2133 / IAM M-273 / BP-1).